The following is a 138-amino-acid chain: Ribosome-binding factor A (138 aa).

The interval 117–138 (ERQNKPAASTEKPPVGSLDADL) is disordered.

Belongs to the RbfA family. Monomer. Binds 30S ribosomal subunits, but not 50S ribosomal subunits or 70S ribosomes.

It is found in the cytoplasm. Its function is as follows. One of several proteins that assist in the late maturation steps of the functional core of the 30S ribosomal subunit. Associates with free 30S ribosomal subunits (but not with 30S subunits that are part of 70S ribosomes or polysomes). Required for efficient processing of 16S rRNA. May interact with the 5'-terminal helix region of 16S rRNA. This chain is Ribosome-binding factor A, found in Acaryochloris marina (strain MBIC 11017).